The chain runs to 918 residues: Alpha-scruin (918 aa).

Kelch repeat units follow at residues V82–R133, R134–E187, R188–G235, I237–K289, I291–A341, and H342–A390. The disordered stretch occupies residues E398–I427. The IQ domain occupies R430–S459. 6 Kelch repeats span residues V590–S641, A642–D695, V696–G743, I745–N795, I797–S849, and L851–P898.

As to expression, sperm.

In terms of biological role, actin bundling protein found in the acrosomal sperm process. This chain is Alpha-scruin, found in Limulus polyphemus (Atlantic horseshoe crab).